The chain runs to 30 residues: Protein ScvA (30 aa).

Positions M1–R30 are disordered.

Functionally, might be involved in DNA-binding; the protein binds DNA in gel-shift assays and immunogold electron microscopy shows labelling of condensed chromatin. In Coxiella burnetii (strain RSA 493 / Nine Mile phase I), this protein is Protein ScvA (scvA).